We begin with the raw amino-acid sequence, 156 residues long: Hemerythrin-like protein (156 aa).

The Fe cation site is built by His54, His84, Glu88, His109, His113, His142, and Asp147.

This sequence belongs to the hemerythrin family.

Oxygen-binding protein. The oxygen-binding site contains two iron atoms. This Nematostella vectensis (Starlet sea anemone) protein is Hemerythrin-like protein.